The primary structure comprises 240 residues: Ribonuclease PH (240 aa).

Phosphate contacts are provided by residues Arg-87 and 125–127; that span reads GTR.

This sequence belongs to the RNase PH family. As to quaternary structure, homohexameric ring arranged as a trimer of dimers.

The catalysed reaction is tRNA(n+1) + phosphate = tRNA(n) + a ribonucleoside 5'-diphosphate. Functionally, phosphorolytic 3'-5' exoribonuclease that plays an important role in tRNA 3'-end maturation. Removes nucleotide residues following the 3'-CCA terminus of tRNAs; can also add nucleotides to the ends of RNA molecules by using nucleoside diphosphates as substrates, but this may not be physiologically important. Probably plays a role in initiation of 16S rRNA degradation (leading to ribosome degradation) during starvation. This Pseudomonas putida (strain GB-1) protein is Ribonuclease PH.